The primary structure comprises 561 residues: Centromere protein T (561 aa).

Residues 1-78 (MADHNPDGDP…IGRSAHVQAR (78 aa)) are disordered. The span at 18-27 (RVLDTADPRT) shows a compositional bias: basic and acidic residues. The segment covering 45 to 57 (TASSRRLSGQTKT) has biased composition (polar residues). At serine 47 the chain carries Phosphoserine. At threonine 85 the chain carries Phosphothreonine. Residues 93–421 (ILLTAPESSI…RHHQFPEPAP (329 aa)) are flexible stalk domain. 3 disordered regions span residues 114-134 (APQVVQPSRRESSRGSLELQL), 256-293 (HSLPCTPHTGAEDAEQAAGRRTQSSGPGLQNNSPGKPA), and 314-457 (SSGV…DPHK). A compositionally biased stretch (polar residues) spans 276–289 (RTQSSGPGLQNNSP). The segment covering 329 to 341 (GVEEAEKKMKEEG) has biased composition (basic and acidic residues). Serine 343, serine 345, serine 356, serine 373, serine 385, serine 386, and serine 397 each carry phosphoserine. Residues 365 to 376 (TQVTEAEGSQGT) are compositionally biased toward polar residues. A compositionally biased stretch (low complexity) spans 439–450 (RCPPRSRTTGPR).

It belongs to the CENP-T/CNN1 family. Component of the CENPA-CAD complex, composed of CENPI, CENPK, CENPL, CENPO, CENPP, CENPQ, CENPR and CENPS. The CENPA-CAD complex is probably recruited on centromeres by the CENPA-NAC complex, at least composed of CENPA, CENPC, CENPH, CENPM, CENPN, CENPT and CENPU. Identified in a centromeric complex containing histones H2A, H2B, H3 and H4, and at least CENPA, CENPB, CENPC, CENPT, CENPN, HJURP, SUPT16H, SSRP1 and RSF1. Interacts (via N-terminus) with the NDC80 complex. Heterodimer with CENPW; this dimer coassembles with CENPS-CENPX heterodimers at centromeres to form the tetrameric CENP-T-W-S-X complex. Post-translationally, dynamically phosphorylated during the cell cycle. Phosphorylated during G2 phase, metaphase and anaphase, but not during telophase or G1 phase.

Its subcellular location is the nucleus. The protein localises to the chromosome. The protein resides in the centromere. It localises to the kinetochore. In terms of biological role, component of the CENPA-NAC (nucleosome-associated) complex, a complex that plays a central role in assembly of kinetochore proteins, mitotic progression and chromosome segregation. The CENPA-NAC complex recruits the CENPA-CAD (nucleosome distal) complex and may be involved in incorporation of newly synthesized CENPA into centromeres. Part of a nucleosome-associated complex that binds specifically to histone H3-containing nucleosomes at the centromere, as opposed to nucleosomes containing CENPA. Component of the heterotetrameric CENP-T-W-S-X complex that binds and supercoils DNA, and plays an important role in kinetochore assembly. CENPT has a fundamental role in kinetochore assembly and function. It is one of the inner kinetochore proteins, with most further proteins binding downstream. Required for normal chromosome organization and normal progress through mitosis. The protein is Centromere protein T (CENPT) of Macaca fascicularis (Crab-eating macaque).